We begin with the raw amino-acid sequence, 398 residues long: MAQVINEMDVPSHSFVFHGTGERYFLICVVNVLLTIITLGIYLPWALMKCKRYLYANMEVNGQRFSYGITGGNVFVSCLFFVFFYFAILMTVSADMPLVGCVLTLLLLVLLIFMAAKGLRHQALMTSLNGVRFSFNCSMKGFWWVTFFLPILMAIGMGTVFFISTKMLPANSSSSVIISMVLMAIVGIVSIGIFNGTLYSLVMSFLWSNTSFGIHRFKVKLDTTYCIKYAILAFLALLPFLAVAGYIIFDQILNAYDSSVYANDDIENLQQFMEMQRKMIIAQLIYYFGIAVSTSYLTVSLRNHFMSNLSLNDGRIRFRLTLTYHGMLYRMCALVVISGITGGLAYPLLKIWMIDWQAKNTYLLGDLDDLPLINKEEQPDKGFLASISRGVMPSLPFL.

Over 1–24 (MAQVINEMDVPSHSFVFHGTGERY) the chain is Cytoplasmic. A helical membrane pass occupies residues 25–45 (FLICVVNVLLTIITLGIYLPW). Topologically, residues 46-73 (ALMKCKRYLYANMEVNGQRFSYGITGGN) are periplasmic. A helical transmembrane segment spans residues 74 to 94 (VFVSCLFFVFFYFAILMTVSA). Position 95 (aspartate 95) is a topological domain, cytoplasmic. A helical transmembrane segment spans residues 96–116 (MPLVGCVLTLLLLVLLIFMAA). At 117 to 142 (KGLRHQALMTSLNGVRFSFNCSMKGF) the chain is on the periplasmic side. Residues 143-163 (WWVTFFLPILMAIGMGTVFFI) traverse the membrane as a helical segment. Residues 164–175 (STKMLPANSSSS) lie on the Cytoplasmic side of the membrane. Residues 176-196 (VIISMVLMAIVGIVSIGIFNG) traverse the membrane as a helical segment. The Periplasmic portion of the chain corresponds to 197–228 (TLYSLVMSFLWSNTSFGIHRFKVKLDTTYCIK). Residues 229-249 (YAILAFLALLPFLAVAGYIIF) form a helical membrane-spanning segment. The Cytoplasmic portion of the chain corresponds to 250–278 (DQILNAYDSSVYANDDIENLQQFMEMQRK). Residues 279–299 (MIIAQLIYYFGIAVSTSYLTV) form a helical membrane-spanning segment. Residues 300 to 333 (SLRNHFMSNLSLNDGRIRFRLTLTYHGMLYRMCA) are Periplasmic-facing. The chain crosses the membrane as a helical span at residues 334–354 (LVVISGITGGLAYPLLKIWMI). The Cytoplasmic portion of the chain corresponds to 355-398 (DWQAKNTYLLGDLDDLPLINKEEQPDKGFLASISRGVMPSLPFL).

It is found in the cell inner membrane. The polypeptide is Inner membrane protein YjgN (yjgN) (Escherichia coli (strain K12)).